Here is a 200-residue protein sequence, read N- to C-terminus: Small ribosomal subunit protein uS4 (200 aa).

The interval 1–43 is disordered; it reads MARYTGPRGRRDRRAGVMLSSMRKNPLEKKPYPPGEHGRDRQR. Positions 25 to 43 are enriched in basic and acidic residues; that stretch reads NPLEKKPYPPGEHGRDRQR. One can recognise an S4 RNA-binding domain in the interval 92 to 158; sequence LRMDNVVYRM…QPIQEAVEQV (67 aa).

Belongs to the universal ribosomal protein uS4 family. In terms of assembly, part of the 30S ribosomal subunit. Contacts protein S5. The interaction surface between S4 and S5 is involved in control of translational fidelity.

One of the primary rRNA binding proteins, it binds directly to 16S rRNA where it nucleates assembly of the body of the 30S subunit. Functionally, with S5 and S12 plays an important role in translational accuracy. The protein is Small ribosomal subunit protein uS4 of Rubrobacter xylanophilus (strain DSM 9941 / JCM 11954 / NBRC 16129 / PRD-1).